Consider the following 354-residue polypeptide: Annexin A13 (354 aa).

4 Annexin repeats span residues 26 to 97 (NDPN…MLLT), 98 to 177 (DTDK…ALLQ), 203 to 275 (NLVE…LTLN), and 279 to 350 (NRPK…ALIG). 17 residues coordinate Ca(2+): Met39, Gly41, Gly43, Thr44, Glu46, Glu83, Met111, Gly113, Gly115, Glu118, Asp163, Asp265, Met292, Gly294, Leu295, Gly296, and Glu336.

This sequence belongs to the annexin family. In terms of assembly, homodimer.

It localises to the tegument. Its subcellular location is the secreted. It is found in the extracellular exosome. The protein resides in the host cell. Involved in reproduction of the worm. Involved in host-parasite interaction. Delivered into the host cell by means of parasite exosomes. Binds to acidic phospholipid membranes in a calcium-dependent manner in vitro. Causes aggregation of liposomes in the presence of calcium, but not in its absence. Likely to promote membrane fusion. May provide structural integrity within the tegument. The polypeptide is Annexin A13 (Schistosoma japonicum (Blood fluke)).